An 827-amino-acid chain; its full sequence is MALDIDYVLSHISQEDKIALLAGIDFWHTHPIPELNVPSIRSTDGPNGIRGTKFFAGVPAACLPCGTALASTWDQNLLREVGVLIGKECLAKGAHCWLGPTINMPRSPLGGRGFESFAEDPHLAGAMAASMITGCESTGVISAVKHFVGNDQEHERRAVDVLVTQRALREIYLRPFQIVARDAGPGALMTSYNKINGKHVVESKEMLDMVRQEWKWNPLIMSDWLGTYTTIDSMNAGLDLEMPGPSRYRGRYVESALQARLIKESTIDSRARKVLEFVQQASRAPVSAVETGRDYPEDRALNRNLCANSIVLLKNQNDILPLPKTIKKIALVGSHVRTPAISGGGSASLEPYYTVSLYDAVSEALPHTEILYEVGAYAHKMLPVIDRLLTNAVMHFYNEPVGTERILRATQRMSKTAFQLMDFNAPELNRGLFYATLTGDFTPDVSGVWDFGLTVFGTGLLYVDDELVVDNTTHQTRGTAFFGKGTVQELGSKTLNAEQTYKIRIEYGSANTSPMKAIGVVHFGGGAAHLGACLHVDSAEMVRSAVKAAAEADYTILCTGLNHEWESEGFDRSHMDLPPGIDALITSVLDVAANKTVIVNQSGTPVTMPWADRARGIVQAWYGGNETGHGIADVIFGDVNPSGKLPLSWPVDVKHNPAYLNYASVGGRVLYGEDVYVGYRYYEKVGREVLFPFGHGLSYTTFTVSPDVVFSQEVFRPEEPPTAAVKIKNTGKVAGAQVLQLYISAPHSPTPRPTKELHGFTKVLLQPGEERVAHIRMDKYATNFWDEIEGMWKSEEGIYEALIGTSSQNILAKGTFRVDRTRYWLGL.

D223 is a catalytic residue. One can recognise a PA14 domain in the interval 387-546 (RLLTNAVMHF…DSAEMVRSAV (160 aa)). N-linked (GlcNAc...) asparagine glycosylation is found at N471, N594, N600, and N625.

This sequence belongs to the glycosyl hydrolase 3 family.

It is found in the secreted. The catalysed reaction is Hydrolysis of terminal, non-reducing beta-D-glucosyl residues with release of beta-D-glucose.. It functions in the pathway glycan metabolism; cellulose degradation. Beta-glucosidases are one of a number of cellulolytic enzymes involved in the degradation of cellulosic biomass. Catalyzes the last step releasing glucose from the inhibitory cellobiose. The chain is Probable beta-glucosidase H (bglH) from Aspergillus flavus (strain ATCC 200026 / FGSC A1120 / IAM 13836 / NRRL 3357 / JCM 12722 / SRRC 167).